The primary structure comprises 1342 residues: Subtilisin-like protease 2 (1342 aa).

Positions 1 to 18 are cleaved as a signal peptide; it reads MLNIIYVVSLILIKFIFY. A propeptide spans 19 to 687 (inhibition peptide); it reads KECNNNNNYY…KLYNNKYSFL (669 aa). 2 disordered regions span residues 85–111 and 143–171; these read EKKTKGEENEIEKKKENDLEEKKENEI and ADVSNNDNSGHEENNKHKLNKKNSSNYKN. Residues N165, N343, N451, N455, and N493 are each glycosylated (N-linked (GlcNAc...) asparagine). Positions 415-474 are disordered; it reads KKSKKEKENTQQKGGNNPNVDINILNNNNNNNNNNNNNSNNNSNSMNDEEINYNNNNNKE. Positions 430 to 474 are enriched in low complexity; the sequence is NNPNVDINILNNNNNNNNNNNNNSNNNSNSMNDEEINYNNNNNKE. Positions 500–531 are disordered; sequence IYHNKNDNSYKNKKEGTGKNNDNNDPNNNNNK. Residues 503–516 are compositionally biased toward basic and acidic residues; the sequence is NKNDNSYKNKKEGT. Residues 518–531 show a composition bias toward low complexity; the sequence is KNNDNNDPNNNNNK. 3 N-linked (GlcNAc...) asparagine glycosylation sites follow: N551, N642, and N729. Over 688 to 1137 the chain is Extracellular; that stretch reads NKFLNIEPLI…LYNLYEYDSH (450 aa). The 294-residue stretch at 727-1020 folds into the Peptidase S8 domain; the sequence is TWNLSIIRVF…DSLVNAEGAV (294 aa). Residues D755 and H798 each act as charge relay system in the active site. N-linked (GlcNAc...) asparagine glycosylation is found at N821, N857, N893, and N951. S961 serves as the catalytic Charge relay system. N-linked (GlcNAc...) asparagine glycosylation is found at N1010 and N1106. Residues 1138–1158 form a helical membrane-spanning segment; the sequence is YLLASVILFFLALLSIFVGMI. Residues 1159–1342 are Cytoplasmic-facing; it reads YMKSRKHSDK…MNQLDDMFMK (184 aa).

Belongs to the peptidase S8 family. In terms of processing, proteolytically cleaved at the N-terminus to generate a 74kDa intermediate which is further processed into a 72kDa form. The first maturation cleavage is autocatalytic, occurs in the ER and is necessary for the subsequent SUB2 trafficking to the microneme. The second cleavage may be mediated by PMX/plasmepsin X.

The protein localises to the cell membrane. The protein resides in the cytoplasmic vesicle. It is found in the secretory vesicle. It localises to the microneme membrane. The enzyme catalyses Hydrolysis of proteins with broad specificity for peptide bonds, and a preference for a large uncharged residue in P1. Hydrolyzes peptide amides.. Activation may be calcium-dependent. Inhibited by the non-covalent interaction with the cleaved propeptide. Functionally, serine protease which plays an essential role in the shedding of AMA1, MSP1 and MSP7 from the surface of the invading merozoite; this step is essential for productive invasion and the release of the adhesion between the erythrocyte and the merozoite. May cleave TRAMP/PTTRAMP, thereby shedding TRAMP from the merozoite surface during erythrocyte invasion. The chain is Subtilisin-like protease 2 from Plasmodium falciparum.